Here is a 338-residue protein sequence, read N- to C-terminus: Glycerol-3-phosphate dehydrogenase [NAD(P)+] (338 aa).

NADPH-binding residues include serine 13, tryptophan 14, and lysine 108. Positions 108, 139, and 141 each coordinate sn-glycerol 3-phosphate. Residue alanine 143 participates in NADPH binding. Sn-glycerol 3-phosphate-binding residues include lysine 194, aspartate 247, serine 257, arginine 258, and asparagine 259. Residue lysine 194 is the Proton acceptor of the active site. Arginine 258 contacts NADPH. NADPH is bound by residues valine 282 and glutamate 284.

It belongs to the NAD-dependent glycerol-3-phosphate dehydrogenase family.

It localises to the cytoplasm. The enzyme catalyses sn-glycerol 3-phosphate + NAD(+) = dihydroxyacetone phosphate + NADH + H(+). The catalysed reaction is sn-glycerol 3-phosphate + NADP(+) = dihydroxyacetone phosphate + NADPH + H(+). The protein operates within membrane lipid metabolism; glycerophospholipid metabolism. Functionally, catalyzes the reduction of the glycolytic intermediate dihydroxyacetone phosphate (DHAP) to sn-glycerol 3-phosphate (G3P), the key precursor for phospholipid synthesis. The polypeptide is Glycerol-3-phosphate dehydrogenase [NAD(P)+] (Streptococcus pyogenes serotype M2 (strain MGAS10270)).